We begin with the raw amino-acid sequence, 1157 residues long: Myosin tail region-interacting protein MTI1 (1157 aa).

Residues 5 to 69 (EVPFKVVAQF…PKSFVAVQGS (65 aa)) form the SH3 domain. 2 disordered regions span residues 68-116 (GSEV…GPVP) and 135-156 (TAVSAQVQHDSSSGNGERKVPM). Positions 77–89 (SSPNTGSTEQRTI) are enriched in polar residues. A compositionally biased stretch (basic and acidic residues) spans 93–110 (VEQKDLPEPISPETKKET). A Phosphoserine modification is found at Ser103. The segment covering 138-149 (SAQVQHDSSSGN) has biased composition (polar residues). Residues Ser158 and Ser166 each carry the phosphoserine modification. Disordered stretches follow at residues 231-256 (PEPINRAQVESGRIETENDQLKKDLP) and 284-888 (KKAK…PKVA). 2 coiled-coil regions span residues 234-301 (INRA…NKNE) and 356-430 (EKEQ…GASR). Composition is skewed to basic and acidic residues over residues 242–256 (GRIETENDQLKKDLP), 284–296 (KKAKLEQEHERSA), and 312–383 (NEKT…RGEN). Over residues 398 to 411 (EGDNDEEKEEEDSE) the composition is skewed to acidic residues. Composition is skewed to basic and acidic residues over residues 412 to 423 (ENRRAALRERMA) and 506 to 524 (KTLDPHATTEHEQKQEHGT). Acidic residues predominate over residues 544–558 (DSDEDTDDHEFEDAN). The residue at position 565 (Ser565) is a Phosphoserine. The span at 574-585 (GNNESENVNSGE) shows a compositional bias: low complexity. Positions 597–606 (RTAEVSHDIE) are enriched in basic and acidic residues. Over residues 607-641 (NSSQNTTGNVLPVSSPQTRVARNGSINSLTKSISG) the composition is skewed to polar residues. Residues Ser621, Ser631, and Ser634 each carry the phosphoserine modification. Phosphothreonine is present on Thr636. Ser638 and Ser647 each carry phosphoserine. Basic and acidic residues predominate over residues 642 to 653 (ENRRKSINEYHD). A compositionally biased stretch (polar residues) spans 654-668 (TVSTNSSALTETAQD). 2 stretches are compositionally biased toward pro residues: residues 691–738 (PHPV…PVSS) and 747–765 (SIPPVPPTPPAPPAPPAPL). Residues 769–778 (KHNEVEEHVK) show a composition bias toward basic and acidic residues. Positions 795–808 (NTAPPLPRAPPVPP) are enriched in pro residues. Positions 832-853 (QNVTASTPSMMSTQQRVPTSVL) are enriched in polar residues. The residue at position 850 (Thr850) is a Phosphothreonine. Ser889 is subject to Phosphoserine. 2 positions are modified to phosphothreonine: Thr894 and Thr895. Lys1012 participates in a covalent cross-link: Glycyl lysine isopeptide (Lys-Gly) (interchain with G-Cter in ubiquitin).

As to quaternary structure, binds to the SH3 domains of the type I myosins MYO3 and MYO5.

It is found in the cytoplasm. Its subcellular location is the cytoskeleton. It localises to the actin patch. Its function is as follows. Involved in the regulation of actin cytoskeleton. This is Myosin tail region-interacting protein MTI1 (BBC1) from Saccharomyces cerevisiae (strain ATCC 204508 / S288c) (Baker's yeast).